The following is a 924-amino-acid chain: Protein translocase subunit SecA (924 aa).

ATP-binding positions include Gln87, 105–109, and Asp515; that span reads GEGKT. Cys908, Cys910, Cys919, and His920 together coordinate Zn(2+).

It belongs to the SecA family. As to quaternary structure, monomer and homodimer. Part of the essential Sec protein translocation apparatus which comprises SecA, SecYEG and auxiliary proteins SecDF-YajC and YidC. Zn(2+) serves as cofactor.

Its subcellular location is the cell inner membrane. The protein localises to the cytoplasm. The catalysed reaction is ATP + H2O + cellular proteinSide 1 = ADP + phosphate + cellular proteinSide 2.. Its function is as follows. Part of the Sec protein translocase complex. Interacts with the SecYEG preprotein conducting channel. Has a central role in coupling the hydrolysis of ATP to the transfer of proteins into and across the cell membrane, serving both as a receptor for the preprotein-SecB complex and as an ATP-driven molecular motor driving the stepwise translocation of polypeptide chains across the membrane. This chain is Protein translocase subunit SecA, found in Cupriavidus pinatubonensis (strain JMP 134 / LMG 1197) (Cupriavidus necator (strain JMP 134)).